A 312-amino-acid polypeptide reads, in one-letter code: Olfactory receptor 2C1 (312 aa).

The Extracellular portion of the chain corresponds to 1-24 (MEVDSNSSSGSFILMGVSDHPHLE). N-linked (GlcNAc...) asparagine glycosylation occurs at asparagine 6. Residues 25-48 (IIFFAVILASYLLTLVGNLTIILL) form a helical membrane-spanning segment. The Cytoplasmic portion of the chain corresponds to 49–57 (SRLDARLHT). Residues 58–79 (PMYFFLSNLSSLDLAFTTSSVP) form a helical membrane-spanning segment. The Extracellular portion of the chain corresponds to 80 to 100 (QMLKNLWGPDKTISYGGCVTQ). A disulfide bridge connects residues cysteine 97 and cysteine 189. The chain crosses the membrane as a helical span at residues 101–120 (LYVFLWLGATECILLVVMAF). At 121-139 (DRYVAVCRPLHYMTVMNPR) the chain is on the cytoplasmic side. The chain crosses the membrane as a helical span at residues 140 to 160 (LCWGLAAISWLGGLGNSVIQS). The Extracellular portion of the chain corresponds to 161 to 200 (TFTLQLPFCGHRKVDNFLCEVPAMIKLACGDTSLNEAVLN). The chain crosses the membrane as a helical span at residues 201 to 222 (GVCTFFTVVPVSVILVSYCFIA). At 223–236 (QAVMKIRSVEGRRK) the chain is on the cytoplasmic side. Residues 237–261 (AFNTCVSHLVVVFLFYGSAIYGYLL) traverse the membrane as a helical segment. Residues 262-272 (PAKSSNQSQGK) lie on the Extracellular side of the membrane. Residues 273–292 (FISLFYSVVTPMVNPLIYTL) traverse the membrane as a helical segment. At 293–312 (RNKEVKGALGRLLGKGRGAS) the chain is on the cytoplasmic side.

This sequence belongs to the G-protein coupled receptor 1 family. As to expression, olfactory epithelium. Present in various subcellular compartments of the olfactory sensory neurons, particularly in the axonal processes and neve terminals.

The protein resides in the cell membrane. Its function is as follows. Olfactory receptor that is activated by the binding of organosulfur odorants with thioether groups such as (methylthio)methanetiol (MTMT). Also binds odorants acetophenone and benzaldehyde. The activity of this receptor is mediated by G proteins which activate adenylyl cyclase. May be involved in the molecular processes underlying fasciculation and targeting of olfactory axons. In Mus musculus (Mouse), this protein is Olfactory receptor 2C1.